The chain runs to 54 residues: Ovomucoid (54 aa).

The region spanning valine 4–cysteine 54 is the Kazal-like domain. Disulfide bonds link cysteine 6–cysteine 36, cysteine 14–cysteine 33, and cysteine 22–cysteine 54. Asparagine 43 carries N-linked (GlcNAc...) asparagine glycosylation.

It localises to the secreted. This Haemorhous mexicanus (House finch) protein is Ovomucoid.